The following is a 568-amino-acid chain: Peroxisomal leader peptide-processing protease (568 aa).

Residues 332 to 568 (TPRGLPLRDL…PLSEVPRSKL (237 aa)) form a serine protease region. Residues His374, Asp410, and Ser483 each act as charge relay system in the active site.

It belongs to the peptidase S1B family. Homodimer. Forms a heterodimer with the C-terminal cleavage product (49 kDa form). Forms a heterodimer with the N-terminal cleavage product (10 kDa form). Interacts with PEX5. Interacts with LONP2. Self-cleavage gives rise to an N-terminal 10-kDa fragment and C-terminal 49-kDa fragment upon import into the peroxisomes. The full-lengh TYSND1 is the active the proteolytic processing of PTS1- and PTS2-proteins and in self-cleavage, and intermolecular self-cleavage of TYSND1 down-regulates its protease activity.

The protein resides in the peroxisome. With respect to regulation, inhibited by N-ethylmaleimide (NEM). Not affected by leupeptin or trans-epoxysuccinyl-l-leucylamido-(4-gianidino) butane (E64). In terms of biological role, peroxisomal protease that mediates both the removal of the leader peptide from proteins containing a PTS2 target sequence and processes several PTS1-containing proteins. Catalyzes the processing of PTS1-proteins involved in the peroxisomal beta-oxidation of fatty acids. This chain is Peroxisomal leader peptide-processing protease (Tysnd1), found in Mus musculus (Mouse).